Here is a 547-residue protein sequence, read N- to C-terminus: CAP-Gly domain-containing linker protein 3 (547 aa).

Residues 1-49 (MTKTDPAPMAPPPRGEEEEEEEEDEPVPEAPSPTQERRQKPVVHPSAPA) are disordered. Residues 16-27 (EEEEEEEEDEPV) show a composition bias toward acidic residues. ANK repeat units follow at residues 117–155 (TDMT…DVTL), 160–189 (TNMN…PRVV), and 197–226 (NHGS…NPAL). The region spanning 314-356 (GTTEFASGQWVGVELDEPEGKNDGSVGGVRYFICPPKQGLFAS) is the CAP-Gly 1 domain. The tract at residues 365–413 (DAPPSSVTSTPRTPRMDFSRVTGKGRREHKGKKKTPSSPSLGSLQQRDR) is disordered. A compositionally biased stretch (low complexity) spans 367 to 377 (PPSSVTSTPRT). At threonine 374 the chain carries Phosphothreonine. Positions 387-399 (GKGRREHKGKKKT) are enriched in basic residues. The span at 400–409 (PSSPSLGSLQ) shows a compositional bias: polar residues. Serine 401 is subject to Phosphoserine. Residues 436–478 (GKTDFAPGYWYGIELDQPTGKHDGSVFGVRYFTCPPRHGVFAP) form the CAP-Gly 2 domain. Positions 488–547 (STDSPGDSVGAKKVHQVTMTQPKRTFTTVRTPKDIASENSISRLLFCCWFPWMLRAEMQS) are goLD. S-palmitoyl cysteine attachment occurs at residues cysteine 534 and cysteine 535.

Homodimer. Interacts with AKT1 and AKT2; when AKT1 and AKT2 are phosphorylated and activated, affinity is higher for AKT2. Interacts with ZDHHC13 (via ANK repeats). Interacts with ZDHHC17 (via ANK repeats). In terms of processing, palmitoylation by ZDHHC17 regulates association with the plasma membrane.

It is found in the cell membrane. The protein resides in the cytoplasm. It localises to the golgi apparatus. Its subcellular location is the golgi stack. Functionally, functions as a cytoplasmic linker protein. Involved in TGN-endosome dynamics. May modulate the cellular compartmentalization of AKT kinase family and promote its cell membrane localization, thereby playing a role in glucose transport in adipocytes. The sequence is that of CAP-Gly domain-containing linker protein 3 (CLIP3) from Pongo abelii (Sumatran orangutan).